We begin with the raw amino-acid sequence, 334 residues long: Ribosomal RNA small subunit methyltransferase H (334 aa).

S-adenosyl-L-methionine-binding positions include 34-36, Asp-52, Ala-87, Asp-100, and Gln-107; that span reads GGY.

The protein belongs to the methyltransferase superfamily. RsmH family.

Its subcellular location is the cytoplasm. The catalysed reaction is cytidine(1402) in 16S rRNA + S-adenosyl-L-methionine = N(4)-methylcytidine(1402) in 16S rRNA + S-adenosyl-L-homocysteine + H(+). Its function is as follows. Specifically methylates the N4 position of cytidine in position 1402 (C1402) of 16S rRNA. The protein is Ribosomal RNA small subunit methyltransferase H of Maricaulis maris (strain MCS10) (Caulobacter maris).